A 534-amino-acid polypeptide reads, in one-letter code: (R)-citramalate synthase (534 aa).

Residues 11 to 274 (FHVFDTTLRD…KQVLPEGRLR (264 aa)) enclose the Pyruvate carboxyltransferase domain.

It belongs to the alpha-IPM synthase/homocitrate synthase family.

The enzyme catalyses pyruvate + acetyl-CoA + H2O = (3R)-citramalate + CoA + H(+). It participates in amino-acid biosynthesis; L-isoleucine biosynthesis; 2-oxobutanoate from pyruvate: step 1/3. Functionally, catalyzes the condensation of pyruvate and acetyl-coenzyme A to form (R)-citramalate. The polypeptide is (R)-citramalate synthase (Streptomyces coelicolor (strain ATCC BAA-471 / A3(2) / M145)).